The following is a 528-amino-acid chain: Glycerol kinase 5 (528 aa).

Residues serine 28 and serine 29 each coordinate ATP. Residues arginine 98, aspartate 275, and glutamine 276 each contribute to the glycerol site. Positions 297, 340, and 440 each coordinate ATP.

Belongs to the FGGY kinase family.

It is found in the cytoplasm. The enzyme catalyses glycerol + ATP = sn-glycerol 3-phosphate + ADP + H(+). The protein operates within polyol metabolism; glycerol degradation via glycerol kinase pathway; sn-glycerol 3-phosphate from glycerol: step 1/1. Functionally, skin-specific kinase that plays a key role in glycerol metabolism, catalyzing its phosphorylation to produce sn-glycerol 3-phosphate. Involved in skin-specific regulation of sterol regulatory element-binding protein (SREBP) processing and lipid biosynthesis. The sequence is that of Glycerol kinase 5 (GK5) from Bos taurus (Bovine).